The sequence spans 120 residues: Crustacean hyperglycemic hormones 4 (120 aa).

Positions 1-26 are cleaved as a signal peptide; the sequence is MVALNTLSAVSAALLVLAASPSPASA. 3 disulfides stabilise this stretch: cysteine 53/cysteine 89, cysteine 69/cysteine 85, and cysteine 72/cysteine 98. Valine 118 bears the Valine amide mark.

The protein belongs to the arthropod CHH/MIH/GIH/VIH hormone family.

The protein resides in the secreted. Functionally, hormone found in the sinus gland of isopods and decapods which controls the blood sugar level. Has a secretagogue action over the amylase released from the midgut gland. May act as a stress hormone and may be involved in the control of molting and reproduction. This Penaeus monodon (Giant tiger prawn) protein is Crustacean hyperglycemic hormones 4 (CHH4).